We begin with the raw amino-acid sequence, 294 residues long: Protoheme IX farnesyltransferase 1 (294 aa).

9 helical membrane-spanning segments follow: residues 8 to 28 (VTKP…FLLA), 35 to 55 (PWLM…GCAI), 82 to 102 (AMAA…LLIA), 107 to 127 (AAVF…SLYM), 132 to 152 (VYGT…GYCA), 162 to 182 (LILL…IAIF), 208 to 228 (IVLY…SGYT), 229 to 249 (GAAF…MALR), and 263 to 283 (QVFA…AVDY).

The protein belongs to the UbiA prenyltransferase family. Protoheme IX farnesyltransferase subfamily.

The protein resides in the cell inner membrane. The catalysed reaction is heme b + (2E,6E)-farnesyl diphosphate + H2O = Fe(II)-heme o + diphosphate. It functions in the pathway porphyrin-containing compound metabolism; heme O biosynthesis; heme O from protoheme: step 1/1. Its function is as follows. Converts heme B (protoheme IX) to heme O by substitution of the vinyl group on carbon 2 of heme B porphyrin ring with a hydroxyethyl farnesyl side group. The chain is Protoheme IX farnesyltransferase 1 from Pseudoalteromonas translucida (strain TAC 125).